Here is a 440-residue protein sequence, read N- to C-terminus: Proline--tRNA ligase (440 aa).

Belongs to the class-II aminoacyl-tRNA synthetase family. ProS type 2 subfamily. As to quaternary structure, homodimer.

The protein localises to the cytoplasm. It carries out the reaction tRNA(Pro) + L-proline + ATP = L-prolyl-tRNA(Pro) + AMP + diphosphate. Catalyzes the attachment of proline to tRNA(Pro) in a two-step reaction: proline is first activated by ATP to form Pro-AMP and then transferred to the acceptor end of tRNA(Pro). In Rhizobium etli (strain ATCC 51251 / DSM 11541 / JCM 21823 / NBRC 15573 / CFN 42), this protein is Proline--tRNA ligase.